The primary structure comprises 291 residues: Popeye domain-containing protein 3 (291 aa).

Asparagine 4 carries an N-linked (GlcNAc...) asparagine glycan. 3 helical membrane-spanning segments follow: residues 27 to 44, 48 to 70, and 77 to 99; these read GAIY…FMGG, FGLL…WAWV, and IFSW…AYQV.

It belongs to the popeye family. Expressed predominantly in skeletal muscle (at protein level). Also detected in heart.

It is found in the membrane. In terms of biological role, may play a role in the maintenance of heart function mediated, at least in part, through cAMP-binding. May play a role in the regulation of KCNK2/TREK-1-mediated current amplitude. The polypeptide is Popeye domain-containing protein 3 (POPDC3) (Homo sapiens (Human)).